The primary structure comprises 213 residues: Uridine kinase (213 aa).

15-22 contributes to the ATP binding site; sequence GASASGKS.

Belongs to the uridine kinase family.

The protein resides in the cytoplasm. It carries out the reaction uridine + ATP = UMP + ADP + H(+). The enzyme catalyses cytidine + ATP = CMP + ADP + H(+). The protein operates within pyrimidine metabolism; CTP biosynthesis via salvage pathway; CTP from cytidine: step 1/3. It participates in pyrimidine metabolism; UMP biosynthesis via salvage pathway; UMP from uridine: step 1/1. This is Uridine kinase from Escherichia fergusonii (strain ATCC 35469 / DSM 13698 / CCUG 18766 / IAM 14443 / JCM 21226 / LMG 7866 / NBRC 102419 / NCTC 12128 / CDC 0568-73).